Consider the following 328-residue polypeptide: Beta-ketoacyl-[acyl-carrier-protein] synthase III (328 aa).

Active-site residues include cysteine 122 and histidine 255. Residues 256-260 (QANVR) are ACP-binding. Residue asparagine 285 is part of the active site.

It belongs to the thiolase-like superfamily. FabH family. As to quaternary structure, homodimer.

It localises to the cytoplasm. It carries out the reaction malonyl-[ACP] + acetyl-CoA + H(+) = 3-oxobutanoyl-[ACP] + CO2 + CoA. Its pathway is lipid metabolism; fatty acid biosynthesis. Its function is as follows. Catalyzes the condensation reaction of fatty acid synthesis by the addition to an acyl acceptor of two carbons from malonyl-ACP. Catalyzes the first condensation reaction which initiates fatty acid synthesis and may therefore play a role in governing the total rate of fatty acid production. Possesses both acetoacetyl-ACP synthase and acetyl transacylase activities. Its substrate specificity determines the biosynthesis of branched-chain and/or straight-chain of fatty acids. The sequence is that of Beta-ketoacyl-[acyl-carrier-protein] synthase III from Bordetella avium (strain 197N).